Reading from the N-terminus, the 86-residue chain is Toxin Td1 (86 aa).

Residues 1–20 (MIRFILFISCFFLIGMVIEC) form the signal peptide. The 63-residue stretch at 21–83 (KDGYLMEPNG…VWERATNRCG (63 aa)) folds into the LCN-type CS-alpha/beta domain. Disulfide bonds link C31–C82, C35–C57, C43–C63, and C47–C65. K84 is subject to Lysine amide.

In terms of tissue distribution, expressed by the venom gland.

The protein resides in the secreted. Beta toxins bind voltage-independently at site-4 of sodium channels (Nav) and shift the voltage of activation toward more negative potentials thereby affecting sodium channel activation and promoting spontaneous and repetitive firing. The protein is Toxin Td1 of Tityus discrepans (Venezuelan scorpion).